Consider the following 237-residue polypeptide: MAIYLPELDPENTLFPKPETALDEPNGLLAFGGDLQPARLLAAYRQGIFPWYSNGEPILWWSPAPRAIFLPNEFKPSKSLRKFYRKSGYQITLNNACHDVIRQCANCRSPEETWITEDMIQAYQTMHNLGHCHSVEVWHQDKLVGGFYGLQIGSVFCGESMFSLADNASKIALWFFCRHFSNQGGTLIDCQVMNNHLESLGALEIPRAPFMQQLHQQRAAIIKPNSFVPQTLKIPIE.

It belongs to the L/F-transferase family.

The protein localises to the cytoplasm. The enzyme catalyses N-terminal L-lysyl-[protein] + L-leucyl-tRNA(Leu) = N-terminal L-leucyl-L-lysyl-[protein] + tRNA(Leu) + H(+). It catalyses the reaction N-terminal L-arginyl-[protein] + L-leucyl-tRNA(Leu) = N-terminal L-leucyl-L-arginyl-[protein] + tRNA(Leu) + H(+). It carries out the reaction L-phenylalanyl-tRNA(Phe) + an N-terminal L-alpha-aminoacyl-[protein] = an N-terminal L-phenylalanyl-L-alpha-aminoacyl-[protein] + tRNA(Phe). Functionally, functions in the N-end rule pathway of protein degradation where it conjugates Leu, Phe and, less efficiently, Met from aminoacyl-tRNAs to the N-termini of proteins containing an N-terminal arginine or lysine. The chain is Leucyl/phenylalanyl-tRNA--protein transferase from Photobacterium profundum (strain SS9).